The sequence spans 129 residues: Fluoride-specific ion channel FluC 2 (129 aa).

4 helical membrane-spanning segments follow: residues 4-24 (LDVMWVCLGGGVGSLGRWWIG), 39-59 (TFLINISGAFVIGYLSVLFGV), 65-85 (YGTMLNAGVLTGILGGYTTFS), and 104-124 (VFYLVASVLSGLFAAWLGAML). Residues glycine 79 and threonine 82 each coordinate Na(+).

The protein belongs to the fluoride channel Fluc/FEX (TC 1.A.43) family.

It localises to the cell inner membrane. The enzyme catalyses fluoride(in) = fluoride(out). Na(+) is not transported, but it plays an essential structural role and its presence is essential for fluoride channel function. In terms of biological role, fluoride-specific ion channel. Important for reducing fluoride concentration in the cell, thus reducing its toxicity. The sequence is that of Fluoride-specific ion channel FluC 2 from Brucella abortus biovar 1 (strain 9-941).